Reading from the N-terminus, the 128-residue chain is Nanos homolog 1 (128 aa).

The essential for its translational repressor activity stretch occupies residues 7–23; the sequence is FNSWSDYLGLSSLISRG. The tract at residues 23–58 is disordered; sequence GLQPREGGESPRPRWKASSPTPAEPLPSKAAEAHGH. The segment at 60-114 adopts a Nanos-type zinc-finger fold; it reads GCGFCRSNREAQSLYSSHRLRAPDGRVLCPVLRGYTCPLCGANGDWAHTMRYCPL. 8 residues coordinate Zn(2+): Cys61, Cys64, His77, Cys88, Cys96, Cys99, His107, and Cys112. 2 short sequence motifs (C2HC) span residues 61–88 and 96–112; these read CGFCRSNREAQSLYSSHRLRAPDGRVLC and CPLCGANGDWAHTMRYC.

Belongs to the nanos family. As to quaternary structure, interacts with ccnb1.

The protein resides in the cytoplasm. It localises to the perinuclear region. Its function is as follows. Acts as a translational repressor. Can mediate repression affecting different steps in the translation process: cap-driven, IRES-driven, polyadenylated RNAs or nonpolyadenylated RNAs. Essential for the development of primordial germ cells (PGCs) by ensuring their proper migration and survival. In Xenopus tropicalis (Western clawed frog), this protein is Nanos homolog 1 (nanos1).